The primary structure comprises 391 residues: S-adenosylmethionine synthase (391 aa).

Position 14 (H14) interacts with ATP. Position 16 (D16) interacts with Mg(2+). E42 contacts K(+). L-methionine contacts are provided by E55 and Q98. The tract at residues 98 to 108 (QSADIAMGVDE) is flexible loop. ATP is bound by residues 172-174 (DGK), 238-239 (RF), D247, 253-254 (RK), A270, and K274. D247 contacts L-methionine. K278 contacts L-methionine.

It belongs to the AdoMet synthase family. As to quaternary structure, homotetramer; dimer of dimers. It depends on Mg(2+) as a cofactor. Requires K(+) as cofactor.

Its subcellular location is the cytoplasm. It carries out the reaction L-methionine + ATP + H2O = S-adenosyl-L-methionine + phosphate + diphosphate. It functions in the pathway amino-acid biosynthesis; S-adenosyl-L-methionine biosynthesis; S-adenosyl-L-methionine from L-methionine: step 1/1. Catalyzes the formation of S-adenosylmethionine (AdoMet) from methionine and ATP. The overall synthetic reaction is composed of two sequential steps, AdoMet formation and the subsequent tripolyphosphate hydrolysis which occurs prior to release of AdoMet from the enzyme. The sequence is that of S-adenosylmethionine synthase from Clostridium botulinum (strain Alaska E43 / Type E3).